The sequence spans 210 residues: V-type sodium ATPase subunit D (210 aa).

The protein belongs to the V-ATPase D subunit family.

Involved in ATP-driven sodium extrusion. The chain is V-type sodium ATPase subunit D (ntpD) from Enterococcus hirae (strain ATCC 9790 / DSM 20160 / JCM 8729 / LMG 6399 / NBRC 3181 / NCIMB 6459 / NCDO 1258 / NCTC 12367 / WDCM 00089 / R).